A 101-amino-acid chain; its full sequence is NAD(P)H-quinone oxidoreductase subunit 4L, chloroplastic (101 aa).

3 helical membrane-spanning segments follow: residues 2-22 (MLEH…YGLI), 32-52 (MCLE…SDFF), and 61-81 (IFSI…SAIV).

Belongs to the complex I subunit 4L family. NDH is composed of at least 16 different subunits, 5 of which are encoded in the nucleus.

Its subcellular location is the plastid. The protein resides in the chloroplast thylakoid membrane. It carries out the reaction a plastoquinone + NADH + (n+1) H(+)(in) = a plastoquinol + NAD(+) + n H(+)(out). The catalysed reaction is a plastoquinone + NADPH + (n+1) H(+)(in) = a plastoquinol + NADP(+) + n H(+)(out). NDH shuttles electrons from NAD(P)H:plastoquinone, via FMN and iron-sulfur (Fe-S) centers, to quinones in the photosynthetic chain and possibly in a chloroplast respiratory chain. The immediate electron acceptor for the enzyme in this species is believed to be plastoquinone. Couples the redox reaction to proton translocation, and thus conserves the redox energy in a proton gradient. The chain is NAD(P)H-quinone oxidoreductase subunit 4L, chloroplastic from Gossypium hirsutum (Upland cotton).